We begin with the raw amino-acid sequence, 297 residues long: Bilin biosynthesis protein MpeU (297 aa).

This sequence belongs to the CpcE/RpcE/PecE family.

Its function is as follows. An enzyme involved in the biosynthesis of bilin. The protein is Bilin biosynthesis protein MpeU (mpeU) of Synechococcus sp. (strain WH8020).